A 353-amino-acid polypeptide reads, in one-letter code: Aromatic amino acid aminotransferase (353 aa).

At lysine 217 the chain carries N6-(pyridoxal phosphate)lysine.

This sequence belongs to the class-II pyridoxal-phosphate-dependent aminotransferase family. Homodimer. It depends on pyridoxal 5'-phosphate as a cofactor.

It catalyses the reaction an aromatic L-alpha-amino acid + 2-oxoglutarate = an aromatic oxo-acid + L-glutamate. Functionally, aminotransferase that catalyzes the conversion of aromatic amino acids and 2-oxoglutarate into corresponding aromatic oxo acids and L-glutamate. This chain is Aromatic amino acid aminotransferase, found in Mycobacterium bovis (strain ATCC BAA-935 / AF2122/97).